The primary structure comprises 356 residues: Methionine import ATP-binding protein MetN (356 aa).

The ABC transporter domain occupies 7–250 (IKLDNIDVTF…PRESLTQDFI (244 aa)). 43–50 (GYSGAGKS) serves as a coordination point for ATP.

This sequence belongs to the ABC transporter superfamily. Methionine importer (TC 3.A.1.24) family. In terms of assembly, the complex is composed of two ATP-binding proteins (MetN), two transmembrane proteins (MetI) and a solute-binding protein (MetQ).

Its subcellular location is the cell membrane. The enzyme catalyses L-methionine(out) + ATP + H2O = L-methionine(in) + ADP + phosphate + H(+). It catalyses the reaction D-methionine(out) + ATP + H2O = D-methionine(in) + ADP + phosphate + H(+). In terms of biological role, part of the ABC transporter complex MetNIQ involved in methionine import. Responsible for energy coupling to the transport system. The chain is Methionine import ATP-binding protein MetN from Streptococcus agalactiae serotype III (strain NEM316).